Reading from the N-terminus, the 423-residue chain is Phosphoribosylamine--glycine ligase (423 aa).

One can recognise an ATP-grasp domain in the interval 107-312 (KAFADRYGLP…LVPYLVACAN (206 aa)). An ATP-binding site is contributed by 133–193 (LELFEPPYVI…EEFLEGEIGS (61 aa)). Mg(2+)-binding residues include E270, E282, and N284. Mn(2+)-binding residues include E270, E282, and N284.

This sequence belongs to the GARS family. Requires Mg(2+) as cofactor. Mn(2+) is required as a cofactor.

It carries out the reaction 5-phospho-beta-D-ribosylamine + glycine + ATP = N(1)-(5-phospho-beta-D-ribosyl)glycinamide + ADP + phosphate + H(+). It functions in the pathway purine metabolism; IMP biosynthesis via de novo pathway; N(1)-(5-phospho-D-ribosyl)glycinamide from 5-phospho-alpha-D-ribose 1-diphosphate: step 2/2. The polypeptide is Phosphoribosylamine--glycine ligase (Phenylobacterium zucineum (strain HLK1)).